An 84-amino-acid polypeptide reads, in one-letter code: Large ribosomal subunit protein uL23 (84 aa).

The protein belongs to the universal ribosomal protein uL23 family. As to quaternary structure, part of the 50S ribosomal subunit. Contacts protein L29.

Binds to 23S rRNA. One of the proteins that surrounds the polypeptide exit tunnel on the outside of the ribosome. In Thermoplasma acidophilum (strain ATCC 25905 / DSM 1728 / JCM 9062 / NBRC 15155 / AMRC-C165), this protein is Large ribosomal subunit protein uL23.